Consider the following 1236-residue polypeptide: ABC transporter B family member 9 (1236 aa).

Residues 33-320 (MTVGTIAAAG…TSPSLNAFAA (288 aa)) enclose the ABC transmembrane type-1 1 domain. The next 6 membrane-spanning stretches (helical) occupy residues 38 to 58 (IAAA…GQLI), 80 to 100 (FIYL…CWMV), 158 to 178 (QLLC…PLLA), 179 to 199 (GVLC…SLIM), 257 to 277 (ISGF…GLAV), and 288 to 308 (GYNG…GMSL). The ABC transporter 1 domain occupies 355–591 (IELKDVYFRY…PEGAYSQLVR (237 aa)). 390 to 397 (GQSGSGKS) lines the ATP pocket. Asn-542 carries an N-linked (GlcNAc...) asparagine glycan. A disordered region spans residues 593–616 (QEGSKEEATESERPETSLDVERSG). Residues 594–616 (EGSKEEATESERPETSLDVERSG) show a composition bias toward basic and acidic residues. 2 N-linked (GlcNAc...) asparagine glycosylation sites follow: Asn-631 and Asn-653. Helical transmembrane passes span 685-705 (VLVL…IFGL), 725-745 (SHFW…MIPV), 785-805 (SLVG…TTGL), 806-826 (IIAF…SPFI), 902-922 (FSFF…AGLI), and 927-947 (ATFG…IGVS). The 273-residue stretch at 686–958 (LVLGSIAAMV…TSAMAPDSNK (273 aa)) folds into the ABC transmembrane type-1 2 domain. The ABC transporter 2 domain occupies 993 to 1230 (IEFRHVSFRY…SGGAYASLVT (238 aa)). Position 1028–1035 (1028–1035 (GESGSGKS)) interacts with ATP. N-linked (GlcNAc...) asparagine glycans are attached at residues Asn-1082 and Asn-1181.

It belongs to the ABC transporter superfamily. ABCB family. Multidrug resistance exporter (TC 3.A.1.201) subfamily.

It is found in the membrane. The polypeptide is ABC transporter B family member 9 (ABCB9) (Arabidopsis thaliana (Mouse-ear cress)).